The following is a 118-amino-acid chain: MLLTMLKAKLHRATVTQADLDYEGSIAIDRDLLDASGILPNEQVDVLNITNGARFTTYAIEAPRGSKVIGVNGAAARLVQKNDLVIVVTYCQMPAEEARNYAPTVVLLDEGNLIKKAA.

The Schiff-base intermediate with substrate; via pyruvic acid role is filled by Ser-25. Ser-25 bears the Pyruvic acid (Ser) mark. Position 57 (Thr-57) interacts with substrate. Tyr-58 acts as the Proton donor in catalysis. 73–75 is a substrate binding site; it reads GAA.

Belongs to the PanD family. As to quaternary structure, heterooctamer of four alpha and four beta subunits. Pyruvate serves as cofactor. In terms of processing, is synthesized initially as an inactive proenzyme, which is activated by self-cleavage at a specific serine bond to produce a beta-subunit with a hydroxyl group at its C-terminus and an alpha-subunit with a pyruvoyl group at its N-terminus.

It localises to the cytoplasm. The catalysed reaction is L-aspartate + H(+) = beta-alanine + CO2. The protein operates within cofactor biosynthesis; (R)-pantothenate biosynthesis; beta-alanine from L-aspartate: step 1/1. Functionally, catalyzes the pyruvoyl-dependent decarboxylation of aspartate to produce beta-alanine. The protein is Aspartate 1-decarboxylase of Caulobacter vibrioides (strain ATCC 19089 / CIP 103742 / CB 15) (Caulobacter crescentus).